The sequence spans 1242 residues: MEPLRPQITYGPIEAVNNEELTEADMLSFISAAVNSTGLIGYNIKSFDDLMDNGIPQIVKQMFNVDITYKDQRDHTEIDKLRESVQIQFNFTDVNIERPQHRNYSQGNKINLLPNKARLCGLSYSGPVNLAAEVILTAHYSNGRQEVKRASIPPFQVSTFPIMRGSNRCHTYHLSKTAKKEIGEDPNEPGGYFIARGGEWVVDLLENIRFNTLHIHYHTMQQGNNEIIRGEFISQPGGAFENSSQIIIRYMTTGAITIEINSTKFSKLRIPWYLIFRMFGMTGDDSIIEQVVFDLESNSPVNTFMIEILEKSIHVSDPIFQPVQHELNREKIIQFLSEKVSKFVSNPSAYKSDENAVQYLNERQLTILDKILLPHMGQTADTRVRKLRFLGLLIHKILLVIMNVFPPTDRDSYRTKRVHGSGVSLAKAFKAIFNTSVIAPIINGFKELLKQTAFEDLTQRNIIEAFSAALSKNSASDLNRSMEQSIISGNKTIMVRQRPIVNRVSTQSLERKNLLNTISALRTVNTHSTTNASKQTERADMMRRVHASYPGYICVAQSADTGEKVGMSKQLAITANVCTAGEVLSLKQRLLSDPAIQQLADVSNKDIVRKGLARVFINGEWIGCCTNAFELAQRYRMLRREGKIVHPHTTIYWDSMVDEVEFWLDVGRLTRPLLIVDNNIEKYNKACYKAAEARKKGDKDWEKHKIPFIQNTRFTSQMAKDILAGTLTLEDLVAQGICEFITPEEAENCLVAFSITELRKHKHDVTRRFTHVDVPQAILGLAALVSPYANCTQPARVTYETNQGRQTGGWYCFSWPYRVDMNRFFQFYNEMPLVKTIAHNYVIPNGLNTIVAYMIYGGYNQEDSVIVSQSFIDRGGFAGTFYREEKVELESDIESFGKPDPLITKNLKPGANYEKLVDGFVPVGTVVKKGDIIIGKVAKIRGEKDELNKYIDRSVMYGFDEPAVVDAVMRPHGPNDEIFGLMRLRYERNLNIGDKMSSRSGNKGIAALALPTSDMPFTEDGLQPDLIVNPHSHPSRMTNGQMIETTVGLANALQGVVTDGTAFLPINVQLLSERLAQEGLRFNGCQKMFNGQTGEYFDAAIFIGPTYHQRLQKFVLDDRYAVASYGPTDALTGQPLDGKRSHGGLRLGEMEHWVLTAQGAMQTIIEKSHDDSDGCISYICRNCGEPAIYNASHPIYKCMNCDVQADISMVDSRRSSIVFQHEMRAANVNITSVLSPRVFQPA.

The C4-type zinc-finger motif lies at 1180–1201 (CRNCGEPAIYNASHPIYKCMNC).

Belongs to the RNA polymerase beta chain family. As to quaternary structure, part of the viral DNA-directed RNA polymerase that consists of 8 polII-like subunits (RPB1, RPB2, RPB3, RPB5, RPB6, RPB7, RPB9, RPB10), a capping enzyme and a termination factor.

The protein resides in the host cytoplasm. It localises to the virion. The catalysed reaction is RNA(n) + a ribonucleoside 5'-triphosphate = RNA(n+1) + diphosphate. Functionally, catalytic component of the DNA-directed RNA polymerase (RNAP) that catalyzes the transcription in the cytoplasm of viral DNA into RNA using the four ribonucleoside triphosphates as substrates. Forms the polymerase active center together with RPB1. Part of the core element with the central large cleft, the clamp element that moves to open and close the cleft and the jaws that are thought to grab the incoming DNA template. The sequence is that of DNA-directed RNA polymerase RPB2 homolog from African swine fever virus (isolate Tick/Malawi/Lil 20-1/1983) (ASFV).